The chain runs to 447 residues: Interferon-induced protein 44-like (447 aa).

Positions 1 to 159 constitute a TLDc domain; that stretch reads MKVTARLTWI…PVECEIFRVD (159 aa).

The protein belongs to the IFI44 family. In terms of assembly, HA-28 antigen forms a complex with Kb MHC in BALB.B donor cells. Interacts with FKBP5; this interaction modulates IKBKB and IKBKE kinase activities. Expressed on cells of the hematopoietic lineage. Detected in transformed cell lines of the macrophage and B-cell lineage. Expressed in spleen and bone marrow.

The protein localises to the cytoplasm. In terms of biological role, type I interferon-stimulated gene (ISG) that plays a critical role in antiviral and antibacterial activity. During bacterial infection, promotes macrophage differentiation and facilitates inflammatory cytokine secretion. Plays a role in the control of respiratory syncycial virus/RSV infection, reducing the ability of the virus to replicate. Acts as a feedback regulator of IFN responses by negatively regulating IKBKB kinase activity through interaction with FKBP5. Its function is as follows. Precursor of the histocompatibility antigen HA-28 in BALB.B mice. More generally, minor histocompatibility antigens refer to immunogenic peptide which, when complexed with MHC, can generate an immune response after recognition by specific T-cells. The peptides are derived from polymorphic intracellular proteins, which are cleaved by normal pathways of antigen processing. The binding of these peptides to MHC molecules and its expression on the cell surface can stimulate T-cell responses and thereby trigger graft rejection or graft-versus-host disease (GVHD). More specifically, HA-28 minor antigen is transcribed in the BALB.B donor but not in host C57BL/6 cells. HA-28 is presented to the donor BALB.B cell surface by Kb MHC. This complex HA-28/Kb MHC elicits cytotoxic T-cell response in C57BL/6 mice immunized with BALB.B spleen cells. It induces C57BL/6 mice cells recognition and lysis by CD8 T-cell from BALB.B mice. The chain is Interferon-induced protein 44-like (Ifi44l) from Mus musculus (Mouse).